Reading from the N-terminus, the 283-residue chain is Bifunctional protein FolD (283 aa).

Residues 163–165 (GRS), Ser-188, and Ile-229 contribute to the NADP(+) site.

Belongs to the tetrahydrofolate dehydrogenase/cyclohydrolase family. In terms of assembly, homodimer.

It carries out the reaction (6R)-5,10-methylene-5,6,7,8-tetrahydrofolate + NADP(+) = (6R)-5,10-methenyltetrahydrofolate + NADPH. The enzyme catalyses (6R)-5,10-methenyltetrahydrofolate + H2O = (6R)-10-formyltetrahydrofolate + H(+). It functions in the pathway one-carbon metabolism; tetrahydrofolate interconversion. Its function is as follows. Catalyzes the oxidation of 5,10-methylenetetrahydrofolate to 5,10-methenyltetrahydrofolate and then the hydrolysis of 5,10-methenyltetrahydrofolate to 10-formyltetrahydrofolate. In Campylobacter fetus subsp. fetus (strain 82-40), this protein is Bifunctional protein FolD.